The primary structure comprises 397 residues: 1-deoxy-D-xylulose 5-phosphate reductoisomerase (397 aa).

Residues Thr-12, Gly-13, Ser-14, Ile-15, Gly-38, Lys-39, Asn-40, and Asn-126 each contribute to the NADPH site. Lys-127 is a binding site for 1-deoxy-D-xylulose 5-phosphate. An NADPH-binding site is contributed by Glu-128. Asp-152 provides a ligand contact to Mn(2+). Positions 153, 154, 188, and 211 each coordinate 1-deoxy-D-xylulose 5-phosphate. Glu-154 contacts Mn(2+). Gly-217 is a binding site for NADPH. 1-deoxy-D-xylulose 5-phosphate contacts are provided by Ser-224, Asn-229, Lys-230, and Glu-233. Glu-233 serves as a coordination point for Mn(2+).

This sequence belongs to the DXR family. Mg(2+) is required as a cofactor. Requires Mn(2+) as cofactor.

The enzyme catalyses 2-C-methyl-D-erythritol 4-phosphate + NADP(+) = 1-deoxy-D-xylulose 5-phosphate + NADPH + H(+). Its pathway is isoprenoid biosynthesis; isopentenyl diphosphate biosynthesis via DXP pathway; isopentenyl diphosphate from 1-deoxy-D-xylulose 5-phosphate: step 1/6. Its function is as follows. Catalyzes the NADPH-dependent rearrangement and reduction of 1-deoxy-D-xylulose-5-phosphate (DXP) to 2-C-methyl-D-erythritol 4-phosphate (MEP). The polypeptide is 1-deoxy-D-xylulose 5-phosphate reductoisomerase (Haemophilus influenzae (strain 86-028NP)).